The sequence spans 283 residues: NFU1 iron-sulfur cluster scaffold homolog, mitochondrial (283 aa).

Residues 1–30 (MSKFLSQAALNTLRNTRLGSRQLVRSFAGI) constitute a mitochondrion transit peptide. The tract at residues 182 to 250 (IKELLDTRIR…IPEVESVEQV (69 aa)) is nifU. [4Fe-4S] cluster-binding residues include Cys219 and Cys222.

This sequence belongs to the NifU family.

The protein localises to the mitochondrion. Its function is as follows. Molecular scaffold for [Fe-S] cluster assembly of mitochondrial iron-sulfur proteins. The protein is NFU1 iron-sulfur cluster scaffold homolog, mitochondrial of Drosophila yakuba (Fruit fly).